A 445-amino-acid polypeptide reads, in one-letter code: Tubulin beta chain (445 aa).

GTP-binding residues include glutamine 11, glutamate 69, serine 138, glycine 142, threonine 143, glycine 144, asparagine 204, and asparagine 226. Glutamate 69 is a binding site for Mg(2+).

This sequence belongs to the tubulin family. As to quaternary structure, dimer of alpha and beta chains. A typical microtubule is a hollow water-filled tube with an outer diameter of 25 nm and an inner diameter of 15 nM. Alpha-beta heterodimers associate head-to-tail to form protofilaments running lengthwise along the microtubule wall with the beta-tubulin subunit facing the microtubule plus end conferring a structural polarity. Microtubules usually have 13 protofilaments but different protofilament numbers can be found in some organisms and specialized cells. It depends on Mg(2+) as a cofactor.

Its subcellular location is the cytoplasm. The protein resides in the cytoskeleton. Functionally, tubulin is the major constituent of microtubules, a cylinder consisting of laterally associated linear protofilaments composed of alpha- and beta-tubulin heterodimers. Microtubules grow by the addition of GTP-tubulin dimers to the microtubule end, where a stabilizing cap forms. Below the cap, tubulin dimers are in GDP-bound state, owing to GTPase activity of alpha-tubulin. In Schizophyllum commune (Split gill fungus), this protein is Tubulin beta chain (TUB-2).